The primary structure comprises 482 residues: Reduced viability upon starvation protein 167 (482 aa).

Serine 2 is subject to N-acetylserine. The 238-residue stretch at 17–254 folds into the BAR domain; it reads FRQKFKMGEQ…YFDLNSDIVE (238 aa). 2 coiled-coil regions span residues 31–64 and 174–204; these read VYED…NGML and AKDE…LKTQ. Lysine 242 is covalently cross-linked (Glycyl lysine isopeptide (Lys-Gly) (interchain with G-Cter in ubiquitin)). A phosphoserine; by FUS3 and PHO85 mark is found at serine 299, serine 321, and serine 379. The segment at 382 to 407 is disordered; the sequence is LTGLGFQQSPQQQQGPPPAYSNPLTS. The 62-residue stretch at 421–482 folds into the SH3 domain; it reads PGVETVTALY…PGNYVQLNKN (62 aa). Residue lysine 481 forms a Glycyl lysine isopeptide (Lys-Gly) (interchain with G-Cter in ubiquitin) linkage.

In terms of assembly, binds to actin. Interacts with ABP1, GYL1, GYP5, PCL2 and YBR108W. Post-translationally, phosphorylated redundantly by cyclin-dependent kinase PHO85 in association with PCL1,2-type cyclins or by MAP kinase FUS3. Phosphorylation inhibits interaction with complexes involved in actin cytoskeleton function.

It is found in the cytoplasm. The protein localises to the cytoskeleton. Its function is as follows. Component of a cytoskeletal structure that is required for the formation of endocytic vesicles at the plasma membrane level. Could be implicated in cytoskeletal reorganization in response to environmental stresses and could act in the budding site selection mechanism. This Saccharomyces cerevisiae (strain ATCC 204508 / S288c) (Baker's yeast) protein is Reduced viability upon starvation protein 167 (RVS167).